The following is a 290-amino-acid chain: Membrane protein insertase YidC (290 aa).

The signal sequence occupies residues 1 to 19 (MKKKTLLPLFLGIMVFLAG). A lipid anchor (N-palmitoyl cysteine) is attached at cysteine 20. Cysteine 20 is lipidated: S-diacylglycerol cysteine. Transmembrane regions (helical) follow at residues 56 to 76 (YGLA…PFML), 134 to 154 (MLGC…YFVL), 176 to 196 (PDIW…YVSS), 207 to 224 (GYMM…ISLS), and 229 to 251 (LGLY…NIYY). The interval 270 to 290 (HNGGSNKKGKNTQVVSKKKKK) is disordered.

It belongs to the OXA1/ALB3/YidC family. Type 2 subfamily.

It localises to the cell membrane. In terms of biological role, required for the insertion and/or proper folding and/or complex formation of integral membrane proteins into the membrane. Involved in integration of membrane proteins that insert both dependently and independently of the Sec translocase complex, as well as at least some lipoproteins. This chain is Membrane protein insertase YidC, found in Staphylococcus aureus (strain MRSA252).